A 736-amino-acid polypeptide reads, in one-letter code: Probable methionine--tRNA ligase, cytoplasmic (736 aa).

Positions 25-35 (PYVNNVPHLGN) match the 'HIGH' region motif. Residues 346–350 (KFSKS) carry the 'KMSKS' region motif. Position 349 (K349) interacts with ATP. Residues 573–680 (PEFPIDMKIA…QSIEAGSKIA (108 aa)) form the tRNA-binding domain.

It belongs to the class-I aminoacyl-tRNA synthetase family.

It is found in the cytoplasm. It carries out the reaction tRNA(Met) + L-methionine + ATP = L-methionyl-tRNA(Met) + AMP + diphosphate. In Dictyostelium discoideum (Social amoeba), this protein is Probable methionine--tRNA ligase, cytoplasmic (metS).